The chain runs to 675 residues: Methionine--tRNA ligase (675 aa).

Residues 15 to 25 (PYANGSIHLGH) carry the 'HIGH' region motif. Positions 146, 149, 159, and 162 each coordinate Zn(2+). The 'KMSKS' region signature appears at 332 to 336 (KMSKS). An ATP-binding site is contributed by Lys-335. The tRNA-binding domain occupies 573–675 (DFAKVDMRIA…SGAQPGMQVK (103 aa)).

This sequence belongs to the class-I aminoacyl-tRNA synthetase family. MetG type 1 subfamily. Homodimer. Zn(2+) serves as cofactor.

It localises to the cytoplasm. The enzyme catalyses tRNA(Met) + L-methionine + ATP = L-methionyl-tRNA(Met) + AMP + diphosphate. Functionally, is required not only for elongation of protein synthesis but also for the initiation of all mRNA translation through initiator tRNA(fMet) aminoacylation. This is Methionine--tRNA ligase from Yersinia pestis bv. Antiqua (strain Angola).